A 258-amino-acid chain; its full sequence is RIO-type serine/threonine-protein kinase Rio1 (258 aa).

The Protein kinase domain occupies 49–258 (TAMGGVISTG…EEMLKEVKGE (210 aa)). Residues 55-63 (ISTGKEANV) and Lys80 each bind ATP. Ser108 carries the post-translational modification Phosphoserine; by autocatalysis. ATP contacts are provided by Glu148 and Ile150. Asp196 acts as the Proton acceptor in catalysis. The ATP site is built by Tyr200, Asn201, and Asp212. Mg(2+) is bound by residues Asn201 and Asp212. Asp212 (4-aspartylphosphate intermediate) is an active-site residue.

It belongs to the protein kinase superfamily. RIO-type Ser/Thr kinase family. Mg(2+) serves as cofactor.

The catalysed reaction is L-seryl-[protein] + ATP = O-phospho-L-seryl-[protein] + ADP + H(+). It carries out the reaction L-threonyl-[protein] + ATP = O-phospho-L-threonyl-[protein] + ADP + H(+). In terms of biological role, autophosphorylation of the rio1 protein is not necessary for maintenance of kinase activity. Prefers ATP over GTP. The yeast ortholog is involved in ribosome biogenesis. Despite the protein kinase domain is proposed to act predominantly as an ATPase. This is RIO-type serine/threonine-protein kinase Rio1 (rio1) from Archaeoglobus fulgidus (strain ATCC 49558 / DSM 4304 / JCM 9628 / NBRC 100126 / VC-16).